Reading from the N-terminus, the 129-residue chain is Ribulose bisphosphate carboxylase small subunit (129 aa).

The span at 104–120 (ENEPSLRMTRTESDGRS) shows a compositional bias: basic and acidic residues. The interval 104-129 (ENEPSLRMTRTESDGRSQHYTWETQR) is disordered.

This sequence belongs to the RuBisCO small chain family. Heterohexadecamer of 8 large and 8 small subunits.

Functionally, ruBisCO catalyzes two reactions: the carboxylation of D-ribulose 1,5-bisphosphate, the primary event in carbon dioxide fixation, as well as the oxidative fragmentation of the pentose substrate. Both reactions occur simultaneously and in competition at the same active site. Although the small subunit is not catalytic it is essential for maximal activity. The sequence is that of Ribulose bisphosphate carboxylase small subunit from Sinorhizobium medicae (strain WSM419) (Ensifer medicae).